The chain runs to 412 residues: Nuclear hormone receptor family member nhr-61 (412 aa).

Positions 1–19 (MIVDSISSSTASTSSSSPT) are enriched in low complexity. The tract at residues 1 to 23 (MIVDSISSSTASTSSSSPTRGTP) is disordered. The nuclear receptor DNA-binding region spans 27 to 102 (SLQCAVCGDV…VGMNPRAVQG (76 aa)). 2 NR C4-type zinc fingers span residues 30 to 50 (CAVCGDVALGKHYGVNACNGC) and 66 to 90 (CRHGGKCLVAKEQRNACRSCRLTRC). Positions 144–407 (KKEQIIDNLR…DWSQELRDHR (264 aa)) constitute an NR LBD domain.

This sequence belongs to the nuclear hormone receptor family.

The protein localises to the nucleus. Functionally, orphan nuclear receptor. In Caenorhabditis elegans, this protein is Nuclear hormone receptor family member nhr-61 (nhr-61).